Reading from the N-terminus, the 103-residue chain is Integration host factor subunit beta (103 aa).

The disordered stretch occupies residues R62–K81.

This sequence belongs to the bacterial histone-like protein family. In terms of assembly, heterodimer of an alpha and a beta chain.

Functionally, this protein is one of the two subunits of integration host factor, a specific DNA-binding protein that functions in genetic recombination as well as in transcriptional and translational control. The sequence is that of Integration host factor subunit beta from Xanthomonas axonopodis pv. citri (strain 306).